Here is a 397-residue protein sequence, read N- to C-terminus: MALALVLNSGSSSIKFQLVNPENSAIDEPYVSGLVEQIGEPNGRIVLKIEGEKYTLETPIADHSEGLNLAFDLMDQHNCGPSQLEITAVGHRVVHGGILFSAPELITDEIVEMIRDLIPLAPLHNPANVDGIDVARKILPDVPHVAVFDTGFFHSLPPAAALYAINKDVAAEHGIRRYGFHGTSHEFVSKRVVEILEKPTEDINTITFHLGNGASMAAVQGGRAVDTSMGMTPLAGLVMGTRSGDIDPGIVFHLSRTAGMSIDEIDNLLNKKSGVKGLSGVNDFRELREMIDNNDQDAWSAYNIYIHQLRRYLGSYMVALGRVDTIVFTAGVGENAQFVREDALAGLEMYGIEIDPERNALPNDGPRLISTDASKVKVFVIPTNEELAIARYAVKFA.

Position 8 (asparagine 8) interacts with Mg(2+). Lysine 15 lines the ATP pocket. Arginine 92 lines the substrate pocket. Catalysis depends on aspartate 149, which acts as the Proton donor/acceptor. Residues 209–213, 283–285, and 331–335 contribute to the ATP site; these read HLGNG, DFR, and GVGEN. Glutamate 385 contributes to the Mg(2+) binding site.

It belongs to the acetokinase family. In terms of assembly, homodimer. Requires Mg(2+) as cofactor. The cofactor is Mn(2+).

The protein resides in the cytoplasm. It carries out the reaction acetate + ATP = acetyl phosphate + ADP. Its pathway is metabolic intermediate biosynthesis; acetyl-CoA biosynthesis; acetyl-CoA from acetate: step 1/2. Functionally, catalyzes the formation of acetyl phosphate from acetate and ATP. Can also catalyze the reverse reaction. The sequence is that of Acetate kinase from Corynebacterium glutamicum (strain ATCC 13032 / DSM 20300 / JCM 1318 / BCRC 11384 / CCUG 27702 / LMG 3730 / NBRC 12168 / NCIMB 10025 / NRRL B-2784 / 534).